A 438-amino-acid chain; its full sequence is Ribosomal protein uS12 methylthiotransferase RimO (438 aa).

The MTTase N-terminal domain occupies 4–114 (PRVSFVSLGC…VMNAVHEVAP (111 aa)). 6 residues coordinate [4Fe-4S] cluster: C13, C49, C78, C146, C150, and C153. In terms of domain architecture, Radical SAM core spans 132–370 (LTPRHYAYLK…MAKQQQISTN (239 aa)). One can recognise a TRAM domain in the interval 373–438 (KKKVGKRLPV…DAYDLHGTAV (66 aa)).

This sequence belongs to the methylthiotransferase family. RimO subfamily. Requires [4Fe-4S] cluster as cofactor.

It is found in the cytoplasm. The enzyme catalyses L-aspartate(89)-[ribosomal protein uS12]-hydrogen + (sulfur carrier)-SH + AH2 + 2 S-adenosyl-L-methionine = 3-methylsulfanyl-L-aspartate(89)-[ribosomal protein uS12]-hydrogen + (sulfur carrier)-H + 5'-deoxyadenosine + L-methionine + A + S-adenosyl-L-homocysteine + 2 H(+). Its function is as follows. Catalyzes the methylthiolation of an aspartic acid residue of ribosomal protein uS12. The protein is Ribosomal protein uS12 methylthiotransferase RimO of Brucella ovis (strain ATCC 25840 / 63/290 / NCTC 10512).